The sequence spans 467 residues: ATP synthase subunit beta (467 aa).

150 to 157 serves as a coordination point for ATP; that stretch reads GGAGVGKT.

It belongs to the ATPase alpha/beta chains family. In terms of assembly, F-type ATPases have 2 components, CF(1) - the catalytic core - and CF(0) - the membrane proton channel. CF(1) has five subunits: alpha(3), beta(3), gamma(1), delta(1), epsilon(1). CF(0) has three main subunits: a(1), b(2) and c(9-12). The alpha and beta chains form an alternating ring which encloses part of the gamma chain. CF(1) is attached to CF(0) by a central stalk formed by the gamma and epsilon chains, while a peripheral stalk is formed by the delta and b chains.

Its subcellular location is the cell inner membrane. The enzyme catalyses ATP + H2O + 4 H(+)(in) = ADP + phosphate + 5 H(+)(out). In terms of biological role, produces ATP from ADP in the presence of a proton gradient across the membrane. The catalytic sites are hosted primarily by the beta subunits. In Aliivibrio fischeri (strain MJ11) (Vibrio fischeri), this protein is ATP synthase subunit beta.